We begin with the raw amino-acid sequence, 144 residues long: Large ribosomal subunit protein uL13 (144 aa).

This sequence belongs to the universal ribosomal protein uL13 family. Part of the 50S ribosomal subunit.

Functionally, this protein is one of the early assembly proteins of the 50S ribosomal subunit, although it is not seen to bind rRNA by itself. It is important during the early stages of 50S assembly. This is Large ribosomal subunit protein uL13 from Clostridium acetobutylicum (strain ATCC 824 / DSM 792 / JCM 1419 / IAM 19013 / LMG 5710 / NBRC 13948 / NRRL B-527 / VKM B-1787 / 2291 / W).